Reading from the N-terminus, the 148-residue chain is MGRFIFVSFGLLVVFLSLSGTEAGVCCPLGWSGYDQNCYKAFEELMNWADAEKFCTQQHKGSHLVSLHNIAEADFVVKKIVSVLKDGVIWMGLNDVWNECNWGWTDGAQLDYKAWNVESNCFIFKTAENHWSRTDCSGTHSFVCKSPA.

The N-terminal stretch at 1-23 (MGRFIFVSFGLLVVFLSLSGTEA) is a signal peptide. Disulfide bonds link C27–C38, C55–C144, and C121–C136. In terms of domain architecture, C-type lectin spans 34-145 (YDQNCYKAFE…CSGTHSFVCK (112 aa)).

This sequence belongs to the snaclec family. In terms of assembly, heterodimer; disulfide-linked. As to expression, expressed by the venom gland.

Its subcellular location is the secreted. In terms of biological role, interferes with one step of hemostasis (modulation of platelet aggregation, or coagulation cascade, for example). The protein is Snaclec 2 of Echis ocellatus (Ocellated saw-scaled viper).